We begin with the raw amino-acid sequence, 24 residues long: Tryptophanase operon leader peptide (24 aa).

This Escherichia coli O157:H7 protein is Tryptophanase operon leader peptide (tnaL).